The following is a 331-amino-acid chain: Ferredoxin--NADP reductase (331 aa).

FAD-binding residues include E34, Q42, Y47, V87, F121, D285, and T325.

This sequence belongs to the ferredoxin--NADP reductase type 2 family. In terms of assembly, homodimer. Requires FAD as cofactor.

It carries out the reaction 2 reduced [2Fe-2S]-[ferredoxin] + NADP(+) + H(+) = 2 oxidized [2Fe-2S]-[ferredoxin] + NADPH. The sequence is that of Ferredoxin--NADP reductase from Lactiplantibacillus plantarum (strain ATCC BAA-793 / NCIMB 8826 / WCFS1) (Lactobacillus plantarum).